We begin with the raw amino-acid sequence, 415 residues long: MNEVLAKGIKAKEVARELVLKSTEQKNEALSAIADQLILETAYILEENKRDIEEGKAKGFSDSLLDRLLLTENRIIDMTEGIKQLIELRDPVGECVSAWERPNGLSIQEMRVPLGVIGMIYEARPNVTVDAATICLKTGNAVILRGSSSAIHSNKAIVAVIHRALKLTSLPQESVQLIEDTTRNSAKQLFTMKDYLDVLIPRGGKQLIDTVVREASVPVLETGAGNCHIFIDETADKQMAFNIIINAKTQRPSVCNAIETIVLHENWAEQYGSELFSSLKERGVELRGDNKAVAIDSSILLATEEDWETEFLSLTLAVKVVSTVEEAIHHINTYGSMHSEAIITENEENVSKFFTSVDAAALYHNASTRFTDGSEFGFGAEIGISTQKLHVRGPMGLPALTSTKYVIRGNGQIRK.

This sequence belongs to the gamma-glutamyl phosphate reductase family.

It localises to the cytoplasm. The enzyme catalyses L-glutamate 5-semialdehyde + phosphate + NADP(+) = L-glutamyl 5-phosphate + NADPH + H(+). Its pathway is amino-acid biosynthesis; L-proline biosynthesis; L-glutamate 5-semialdehyde from L-glutamate: step 2/2. In terms of biological role, catalyzes the NADPH-dependent reduction of L-glutamate 5-phosphate into L-glutamate 5-semialdehyde and phosphate. The product spontaneously undergoes cyclization to form 1-pyrroline-5-carboxylate. This is Gamma-glutamyl phosphate reductase from Bacillus cereus (strain B4264).